The sequence spans 614 residues: Lamin-2 (614 aa).

The segment covering methionine 1–glycine 10 has biased composition (basic residues). The tract at residues methionine 1–threonine 51 is disordered. The interval methionine 1–leucine 76 is head. Residues alanine 21–threonine 37 are compositionally biased toward low complexity. Positions serine 77–serine 117 are coil 1A. Residues glutamate 81–leucine 433 enclose the IF rod domain. Positions serine 118–lysine 128 are linker 1. Residues glutamate 129–arginine 268 are coil 1B. Residues arginine 269 to lysine 286 form a linker 2 region. Residues isoleucine 287–leucine 426 form a coil 2 region. Residues arginine 427 to cysteine 611 are tail. The disordered stretch occupies residues leucine 433 to arginine 454. A Nuclear localization signal motif is present at residues arginine 449–serine 458. In terms of domain architecture, LTD spans threonine 462–serine 581. The S-farnesyl cysteine moiety is linked to residue cysteine 611. A propeptide spans valine 612–methionine 614 (removed in mature form).

It belongs to the intermediate filament family.

The protein resides in the nucleus inner membrane. Functionally, intermediate filament (IF) protein, component of the nuclear lamina, a fibrous layer on the nucleoplasmic side of the inner nuclear membrane, which is thought to provide a framework for the nuclear envelope. The sequence is that of Lamin-2 from Hypsibius exemplaris (Freshwater tardigrade).